The following is a 325-amino-acid chain: MVCGSPGGMLLLRAGLLALAALCLLRVPGARAAACEPVRIPLCKSLPWNMTKMPNHLHHSTQANAILAIEQFEGLLGTHCSPDLLFFLCAMYAPICTIDFQHEPIKPCKSVCERARQGCEPILIKYRHSWPENLACEELPVYDRGVCISPEAIVTADGADFPMDSSNGNCRGASSERCKCKPIRATQKTYFRNNYNYVIRAKVKEIKTKCHDVTAVVEVKEILKSSLVNIPRDTVNLYTSSGCLCPPLNVNEEYIIMGYEDEERSRLLLVEGSIAEKWKDRLGKKVKRWDMKLRHLGLSKSDSSNSDSTQSQKSGRNSNPRQARN.

Positions 1-32 are cleaved as a signal peptide; sequence MVCGSPGGMLLLRAGLLALAALCLLRVPGARA. The FZ domain maps to 33 to 150; the sequence is AACEPVRIPL…VYDRGVCISP (118 aa). Intrachain disulfides connect C35–C96, C43–C89, C80–C119, C108–C147, and C112–C136. N49 carries an N-linked (GlcNAc...) asparagine glycan. The NTR domain maps to 178–298; that stretch reads CKCKPIRATQ…WDMKLRHLGL (121 aa). The disordered stretch occupies residues 297–325; sequence GLSKSDSSNSDSTQSQKSGRNSNPRQARN. A compositionally biased stretch (low complexity) spans 299–314; sequence SKSDSSNSDSTQSQKS. Polar residues predominate over residues 315–325; sequence GRNSNPRQARN.

This sequence belongs to the secreted frizzled-related protein (sFRP) family. In terms of assembly, interacts with MYOC. In terms of tissue distribution, expressed primarily in the cartilaginous cores of the long bone during embryonic and fetal development and in the appendicular skeleton (6-13 weeks). At 13 weeks of gestation, transcripts were present in early chondroblasts of the tarsal bones of the foot, the carpal bones of the hands and the epiphysis of long bones. Highly expressed in placenta and heart, followed by brain, skeletal muscle, kidney and pancreas. Weakly expressed in lung and liver.

It is found in the secreted. Soluble frizzled-related proteins (sFRPS) function as modulators of Wnt signaling through direct interaction with Wnts. They have a role in regulating cell growth and differentiation in specific cell types. SFRP3/FRZB appears to be involved in limb skeletogenesis. Antagonist of Wnt8 signaling. Regulates chondrocyte maturation and long bone development. The polypeptide is Secreted frizzled-related protein 3 (FRZB) (Homo sapiens (Human)).